A 354-amino-acid polypeptide reads, in one-letter code: MLKLFLSTPRTLPNSRFLLLRRLQPLGLRYRSDASSLHLFTPTWRDHATNTIIKFVPQQVAYVVERMGRFSRILTPGVAFLAPIIDKIAYIHSLKERALEIPTQSAITLDNVSLGLDGVLYIQVYDPYKASYGVEDADYAISQLAQTTMRSEIGRLTLDHVLRERQSLNIHITDAINKAAESWGIRCLRHEIRDIRPPESVVMAMHQQVSAERQKRAEILESEGKRQAAINVAEGDKQAEILDSEGQKIKTINSALAEAQAIREKASATASGIAVLADSIKKQEHGLEAVSLYIAQQYITNFGKLAKASNSMIVPASTSDVSGMVAQALSIFKQVSKTTAPDKSTPKELHTDEK.

It belongs to the band 7/mec-2 family.

It is found in the mitochondrion. This is an uncharacterized protein from Schizosaccharomyces pombe (strain 972 / ATCC 24843) (Fission yeast).